We begin with the raw amino-acid sequence, 1979 residues long: Repetitive organellar protein (1979 aa).

Residues 1-12 (MVFTFKNKKKKK) are compositionally biased toward basic residues. Disordered regions lie at residues 1-42 (MVFT…DSWY) and 54-116 (TKYK…NNYS). Composition is skewed to basic and acidic residues over residues 13–24 (EASSDKVSKESF) and 31–42 (NNEKREKSDSWY). The span at 68–114 (EDIINNNNNNNNDNNNDNNNDNNNDNNNDNNNDNNNENNNDNNNFNN) shows a compositional bias: low complexity. 6 coiled-coil regions span residues 127 to 366 (DNEL…LKDE), 412 to 666 (LKVY…EMEL), 693 to 876 (LKES…KKKQ), 992 to 1094 (KKKH…YKTI), 1126 to 1307 (VDKI…MNIK), and 1398 to 1467 (IANY…LTSQ).

The protein resides in the host cell membrane. The chain is Repetitive organellar protein from Plasmodium falciparum (isolate 3D7).